Consider the following 258-residue polypeptide: Indole-3-glycerol phosphate synthase (258 aa).

The protein belongs to the TrpC family.

It catalyses the reaction 1-(2-carboxyphenylamino)-1-deoxy-D-ribulose 5-phosphate + H(+) = (1S,2R)-1-C-(indol-3-yl)glycerol 3-phosphate + CO2 + H2O. The protein operates within amino-acid biosynthesis; L-tryptophan biosynthesis; L-tryptophan from chorismate: step 4/5. This Nautilia profundicola (strain ATCC BAA-1463 / DSM 18972 / AmH) protein is Indole-3-glycerol phosphate synthase.